The following is a 681-amino-acid chain: DNA ligase (681 aa).

NAD(+) contacts are provided by residues 34–38, 83–84, and E115; these read DAEYD and SL. Catalysis depends on K117, which acts as the N6-AMP-lysine intermediate. 4 residues coordinate NAD(+): R138, E185, K301, and K325. The Zn(2+) site is built by C419, C422, C437, and C443. In terms of domain architecture, BRCT spans 602–681; sequence RKSDVLAGQT…AALLALIGER (80 aa).

This sequence belongs to the NAD-dependent DNA ligase family. LigA subfamily. It depends on Mg(2+) as a cofactor. Requires Mn(2+) as cofactor.

It carries out the reaction NAD(+) + (deoxyribonucleotide)n-3'-hydroxyl + 5'-phospho-(deoxyribonucleotide)m = (deoxyribonucleotide)n+m + AMP + beta-nicotinamide D-nucleotide.. DNA ligase that catalyzes the formation of phosphodiester linkages between 5'-phosphoryl and 3'-hydroxyl groups in double-stranded DNA using NAD as a coenzyme and as the energy source for the reaction. It is essential for DNA replication and repair of damaged DNA. This chain is DNA ligase, found in Chloroflexus aggregans (strain MD-66 / DSM 9485).